We begin with the raw amino-acid sequence, 310 residues long: Probable mitochondrial import receptor subunit TOM40-2 (310 aa).

Met1 is subject to N-acetylmethionine.

It belongs to the Tom40 family. Forms part of the preprotein translocase complex of the outer mitochondrial membrane (TOM complex) which consists of at least 6 different proteins (TOM5, TOM6, TOM7, TOM20, TOM22/TOM9 and TOM40). Present in a large lipid-enriched complex called mitochondrial transmembrane lipoprotein (MTL) complex made of proteins located in the two mitochondrial membranes, including the TOM complex and the core components of the MICOS complex and containing at least digalactosyldiacylglycerol (DGDG). Binds to MIC60. Component of a mitochondrial large protein complex that contains, at least, MIC60, DGS1, TOM40, TOM20 proteins, and petC/RISP. Expressed in roots, flowers, young cotyledons and leaves.

The protein resides in the mitochondrion outer membrane. In terms of biological role, central component of the receptor complex responsible for the recognition and translocation of cytosolically synthesized mitochondrial preproteins. Together with TOM22 functions as the transit peptide receptor at the surface of the mitochondrion outer membrane and facilitates the movement of preproteins into the translocation pore. Directly involved in the pore formation. This is Probable mitochondrial import receptor subunit TOM40-2 from Arabidopsis thaliana (Mouse-ear cress).